A 373-amino-acid chain; its full sequence is Peroxisomal biogenesis factor 3 (373 aa).

Residues 1–15 (MLRSVWNFLKRHKKK) lie on the Cytoplasmic side of the membrane. The targeting to peroxisomes stretch occupies residues 1 to 45 (MLRSVWNFLKRHKKKCIFLGTVLGGVYILGKYGQKKIREIQEREA). A helical transmembrane segment spans residues 16–36 (CIFLGTVLGGVYILGKYGQKK). Residues 37–116 (IREIQEREAA…LKIISFTRST (80 aa)) lie on the Peroxisomal side of the membrane. A helical transmembrane segment spans residues 117-140 (VAVYSTCMLVVLLRVQLNIIGGYI). The segment at 120–136 (YSTCMLVVLLRVQLNII) is interaction with PEX19. The Cytoplasmic portion of the chain corresponds to 141-373 (YLDNAAVGKN…AFSTPQQLEK (233 aa)).

The protein belongs to the peroxin-3 family. In terms of assembly, interacts with PEX19. Found in all examined tissues.

Its subcellular location is the peroxisome membrane. Functionally, involved in peroxisome biosynthesis and integrity. Assembles membrane vesicles before the matrix proteins are translocated. As a docking factor for PEX19, is necessary for the import of peroxisomal membrane proteins in the peroxisomes. The polypeptide is Peroxisomal biogenesis factor 3 (PEX3) (Homo sapiens (Human)).